The following is a 296-amino-acid chain: Transposase for insertion sequence element IS629 (296 aa).

One can recognise an Integrase catalytic domain in the interval 125 to 285; that stretch reads VAERPDQLWV…TPPAEAEKAY (161 aa).

Functionally, involved in the transposition of the insertion sequence. This Shigella sonnei protein is Transposase for insertion sequence element IS629.